The primary structure comprises 129 residues: Protein LLP homolog (129 aa).

Positions 1–21 are enriched in basic residues; the sequence is MAKSLRSKWKRKMRAEKRKKN. The segment at 1 to 27 is disordered; that stretch reads MAKSLRSKWKRKMRAEKRKKNAPKEAS. Residues lysine 67 and lysine 74 each participate in a glycyl lysine isopeptide (Lys-Gly) (interchain with G-Cter in SUMO2) cross-link. The segment covering 100-122 has biased composition (basic residues); the sequence is RQRKRLKAKREKRKGKSKAKAVK. The interval 100–129 is disordered; the sequence is RQRKRLKAKREKRKGKSKAKAVKVAKGLAW.

The protein belongs to the learning-associated protein family. In terms of assembly, interacts with CTCF, MYO1C and with the transcriptional machinery, including RNA polymerase II and TBP.

It is found in the nucleus. The protein localises to the nucleolus. Its subcellular location is the chromosome. Functionally, in hippocampal neurons, regulates dendritic and spine growth and synaptic transmission. In Homo sapiens (Human), this protein is Protein LLP homolog (LLPH).